The primary structure comprises 194 residues: Imidazoleglycerol-phosphate dehydratase (194 aa).

It belongs to the imidazoleglycerol-phosphate dehydratase family.

Its subcellular location is the cytoplasm. The catalysed reaction is D-erythro-1-(imidazol-4-yl)glycerol 3-phosphate = 3-(imidazol-4-yl)-2-oxopropyl phosphate + H2O. The protein operates within amino-acid biosynthesis; L-histidine biosynthesis; L-histidine from 5-phospho-alpha-D-ribose 1-diphosphate: step 6/9. The sequence is that of Imidazoleglycerol-phosphate dehydratase from Chlorobaculum parvum (strain DSM 263 / NCIMB 8327) (Chlorobium vibrioforme subsp. thiosulfatophilum).